We begin with the raw amino-acid sequence, 168 residues long: G/U mismatch-specific DNA glycosylase (168 aa).

It belongs to the uracil-DNA glycosylase (UDG) superfamily. TDG/mug family. Binds DNA as a monomer.

The protein localises to the cytoplasm. The catalysed reaction is Specifically hydrolyzes mismatched double-stranded DNA and polynucleotides, releasing free uracil.. Excises ethenocytosine and uracil, which can arise by alkylation or deamination of cytosine, respectively, from the corresponding mispairs with guanine in ds-DNA. It is capable of hydrolyzing the carbon-nitrogen bond between the sugar-phosphate backbone of the DNA and the mispaired base. The complementary strand guanine functions in substrate recognition. Required for DNA damage lesion repair in stationary-phase cells. The chain is G/U mismatch-specific DNA glycosylase from Escherichia coli (strain SMS-3-5 / SECEC).